We begin with the raw amino-acid sequence, 476 residues long: E1B 55 kDa protein (476 aa).

Disordered stretches follow at residues 1 to 20 (MERP…GNGS) and 42 to 95 (FGSS…KMEN). Ser472 and Ser473 each carry phosphoserine.

This sequence belongs to the adenoviridae E1B 55 kDa protein family. Interacts with host PML-4 and PML-5; this interaction promotes efficient subnuclear targeting of E1B-55K to PML nuclear bodies. Interacts with E4-ORF3 protein. Interacts with E4-ORF6 protein.

The protein localises to the host nucleus. It is found in the host cytoplasm. In terms of biological role, plays a major role to prevent cellular inhibition of viral genome replication. Assembles an SCF-like E3 ubiquitin ligase complex based on the cellular proteins ELOB, ELOC, CUL5 and RBX1, in cooperation with viral E4orf6. This viral RING-type ligase ubiquitinates cellular substrates and targets them to proteasomal degradation: TP53/p53, LIG4, MRE11-RAD50-NBS1 (MRN) complex, ITGA3, DAXX and BLM. E1B-55K probably acts as the substrate-specific adapter of the SCF-like E3 ubiquitin ligase complex. Degradation of host TP53/p53 activity is essential for preventing E1A-induced TP53 accumulation that would otherwise lead to cell apoptosis and growth arrest. E1B-55K also inactivates TP53 transcription-factor activity by binding its transactivation domain. E1B-55K also functions as a SUMO1 E3 ligase for TP53 which causes the latter to be sequestered in promyelocytic leukemia (PML) nuclear bodies thereby contributing to maximal inhibition of TP53 function. In Human adenovirus F serotype 40 (HAdV-40), this protein is E1B 55 kDa protein.